The following is a 407-amino-acid chain: MSAVPLKNDKPVEAGVRTVTVLGATGSIGDSTMDLLRGARGRYRVEALTANSNVEGLVKLAREFDARFVALADTSYFDELKNALAGTGIEYGVGESAIIEAASRPADWLMAAVSGAAGLKPALAAVDRGATIALANKECLVCAGDFFMQRAARAGACVLPADSEHNALFQALSSGNRDELTRVIITASGGPFRTWAAADIENATLAQALKHPNWSMGRKITIDSASMMNKGLEVIEAACLFALEPEEIDVLVHPQSIVHGMVEFSDRSVVAQLGAPDMRTPIAHCLGWPERIAGPAAKLDLVSIGQLTFEAPDFARFPALRLAYDALRTGQGATTVYNAANEIAVAAFIAEKIRFGAIARLVEATLNGWVRAGNLAPLASADDAIAVDHNARNMAASLLPQIAAKAS.

Residues Thr25, Gly26, Ser27, Ile28, Asn53, and Asn136 each coordinate NADPH. Lys137 serves as a coordination point for 1-deoxy-D-xylulose 5-phosphate. An NADPH-binding site is contributed by Glu138. Position 162 (Asp162) interacts with Mn(2+). Positions 163, 164, 188, and 211 each coordinate 1-deoxy-D-xylulose 5-phosphate. Glu164 contributes to the Mn(2+) binding site. NADPH is bound at residue Gly217. 1-deoxy-D-xylulose 5-phosphate contacts are provided by Ser224, Asn229, Lys230, and Glu233. Residue Glu233 participates in Mn(2+) binding.

This sequence belongs to the DXR family. Mg(2+) serves as cofactor. It depends on Mn(2+) as a cofactor.

The enzyme catalyses 2-C-methyl-D-erythritol 4-phosphate + NADP(+) = 1-deoxy-D-xylulose 5-phosphate + NADPH + H(+). It functions in the pathway isoprenoid biosynthesis; isopentenyl diphosphate biosynthesis via DXP pathway; isopentenyl diphosphate from 1-deoxy-D-xylulose 5-phosphate: step 1/6. In terms of biological role, catalyzes the NADPH-dependent rearrangement and reduction of 1-deoxy-D-xylulose-5-phosphate (DXP) to 2-C-methyl-D-erythritol 4-phosphate (MEP). The polypeptide is 1-deoxy-D-xylulose 5-phosphate reductoisomerase (Nitrobacter winogradskyi (strain ATCC 25391 / DSM 10237 / CIP 104748 / NCIMB 11846 / Nb-255)).